The following is a 392-amino-acid chain: Galactokinase (392 aa).

4 residues coordinate alpha-D-galactose: Arg37, Glu43, His44, and Asp46. The ATP site is built by Gly136, Gly138, Ser140, and Ser141. Asp186 provides a ligand contact to alpha-D-galactose. Catalysis depends on Asp186, which acts as the Proton acceptor. A Phosphoserine modification is found at Ser230. Tyr236 is a binding site for alpha-D-galactose.

This sequence belongs to the GHMP kinase family. GalK subfamily. Homodimer.

It catalyses the reaction alpha-D-galactose + ATP = alpha-D-galactose 1-phosphate + ADP + H(+). It functions in the pathway carbohydrate metabolism; galactose metabolism. Catalyzes the transfer of a phosphate from ATP to alpha-D-galactose and participates in the first committed step in the catabolism of galactose. In Homo sapiens (Human), this protein is Galactokinase.